Consider the following 142-residue polypeptide: Large ribosomal subunit protein uL11 (142 aa).

The protein belongs to the universal ribosomal protein uL11 family. As to quaternary structure, part of the ribosomal stalk of the 50S ribosomal subunit. Interacts with L10 and the large rRNA to form the base of the stalk. L10 forms an elongated spine to which L12 dimers bind in a sequential fashion forming a multimeric L10(L12)X complex. One or more lysine residues are methylated.

Forms part of the ribosomal stalk which helps the ribosome interact with GTP-bound translation factors. This Ruthia magnifica subsp. Calyptogena magnifica protein is Large ribosomal subunit protein uL11.